Here is a 242-residue protein sequence, read N- to C-terminus: Protein LST7 (242 aa).

The region spanning 48-212 is the uDENN FLCN/SMCR8-type domain; that stretch reads SCLLQFPEES…NKSKFGRNLV (165 aa).

Required for the nitrogen-regulated transport of amino acid permeases GAP1 and PUT4 from the Golgi to the cell surface. The protein is Protein LST7 (LST7) of Saccharomyces cerevisiae (strain ATCC 204508 / S288c) (Baker's yeast).